The primary structure comprises 549 residues: Cation/acetate symporter ActP (549 aa).

The next 13 membrane-spanning stretches (helical) occupy residues 33-53, 77-97, 103-123, 148-168, 183-203, 206-226, 262-282, 303-323, 355-375, 404-424, 428-448, 464-484, and 493-513; these read WQAI…TYWA, LAIA…ALVF, GLIY…LIAE, ILSA…QMVG, IAVV…GMLA, WVQI…AFMV, ISAL…PHIL, GFMG…IMLV, LFLG…VAGL, VSKI…VLFE, IAFM…PIIL, GGWL…TIWV, and IFPY…GIWF.

Belongs to the sodium:solute symporter (SSF) (TC 2.A.21) family.

Its subcellular location is the cell inner membrane. Transports acetate. This Escherichia coli O8 (strain IAI1) protein is Cation/acetate symporter ActP.